Consider the following 598-residue polypeptide: Thiol:disulfide interchange protein DsbD (598 aa).

An N-terminal signal peptide occupies residues 1 to 21 (MRALLTFFVAGLLVLSSPAMA). An intrachain disulfide couples C130 to C136. Residues 158–180 (TMPTQTASPLDTSTANTSTPQPL) are disordered. Over residues 159–180 (MPTQTASPLDTSTANTSTPQPL) the composition is skewed to polar residues. Transmembrane regions (helical) follow at residues 198 to 220 (LLFLALGVGLAFTPCVLPMYPIL), 240 to 262 (LVYVQGMALTYTLLGLVVASAGL), 274 to 296 (LIGLSILFVTLALSMFGVYTLQL), 324 to 346 (AISGLVCSPCTTAPLSGALLYVA), 353 to 375 (TGGVALYALAMGMGIPLILVAVF), 385 to 407 (GWMDHVKTLFGFVLLAAPIFLLE), 414 to 431 (WSTALWSALGIAAFGWLY), and 446 to 468 (AVGIIAVLGLFASAQPALNYWFA). The cysteines at positions 212 and 333 are disulfide-linked. Positions 456–598 (FASAQPALNY…FLEHIQRISN (143 aa)) constitute a Thioredoxin domain. C513 and C516 are joined by a disulfide.

The protein belongs to the thioredoxin family. DsbD subfamily.

It localises to the cell inner membrane. The catalysed reaction is [protein]-dithiol + NAD(+) = [protein]-disulfide + NADH + H(+). It catalyses the reaction [protein]-dithiol + NADP(+) = [protein]-disulfide + NADPH + H(+). Functionally, required to facilitate the formation of correct disulfide bonds in some periplasmic proteins and for the assembly of the periplasmic c-type cytochromes. Acts by transferring electrons from cytoplasmic thioredoxin to the periplasm. This transfer involves a cascade of disulfide bond formation and reduction steps. The protein is Thiol:disulfide interchange protein DsbD of Vibrio vulnificus (strain YJ016).